A 198-amino-acid polypeptide reads, in one-letter code: Sortase D (198 aa).

Residues 7 to 25 form a helical membrane-spanning segment; that stretch reads LFIIAAGLVIAGYGGFKLI. The span at 36 to 46 shows a compositional bias: basic and acidic residues; it reads KEAKLAAKKPQ. The tract at residues 36-67 is disordered; that stretch reads KEAKLAAKKPQEASGTKNSTDQAKNKASFKPE. Polar residues predominate over residues 48–57; it reads ASGTKNSTDQ. The Proton donor/acceptor role is filled by H119. Catalysis depends on C177, which acts as the Acyl-thioester intermediate.

The protein belongs to the bacterial sortase family. Class D subfamily.

Its subcellular location is the cell membrane. Its function is as follows. Transpeptidase that anchors surface proteins to the cell wall. Recognizes and modifies its substrate by proteolytic cleavage of a C-terminal sorting signal. Following cleavage, a covalent intermediate is formed via a thioester bond between the sortase and its substrate, which is then transferred and covalently attached to the cell wall. This sortase recognizes a Leu-Pro-Asp-Thr-Ser/Ala (LPDTS/A) motif. It has two substrates, YhcR and YfkN. The polypeptide is Sortase D (Bacillus subtilis (strain 168)).